We begin with the raw amino-acid sequence, 299 residues long: Zinc import ATP-binding protein ZnuC (299 aa).

Positions Val-13–Thr-228 constitute an ABC transporter domain. Gly-45–Ser-52 is a binding site for ATP.

This sequence belongs to the ABC transporter superfamily. Zinc importer (TC 3.A.1.15.5) family. In terms of assembly, the complex is composed of two ATP-binding proteins (ZnuC), two transmembrane proteins (ZnuB) and a solute-binding protein (ZnuA).

It localises to the cell inner membrane. It catalyses the reaction Zn(2+)(out) + ATP(in) + H2O(in) = Zn(2+)(in) + ADP(in) + phosphate(in) + H(+)(in). Functionally, part of the ABC transporter complex ZnuABC involved in zinc import. Responsible for energy coupling to the transport system. The chain is Zinc import ATP-binding protein ZnuC from Agrobacterium fabrum (strain C58 / ATCC 33970) (Agrobacterium tumefaciens (strain C58)).